Here is a 327-residue protein sequence, read N- to C-terminus: Ribosomal RNA small subunit methyltransferase H (327 aa).

Residues 41-43, Asp-60, Tyr-87, Asp-108, and Gln-115 each bind S-adenosyl-L-methionine; that span reads GGH. Residues 292 to 327 form a disordered region; it reads AERADEQETLENPRAASARLRAVERLRETTTPGSAR.

The protein belongs to the methyltransferase superfamily. RsmH family.

Its subcellular location is the cytoplasm. The enzyme catalyses cytidine(1402) in 16S rRNA + S-adenosyl-L-methionine = N(4)-methylcytidine(1402) in 16S rRNA + S-adenosyl-L-homocysteine + H(+). In terms of biological role, specifically methylates the N4 position of cytidine in position 1402 (C1402) of 16S rRNA. This Kocuria rhizophila (strain ATCC 9341 / DSM 348 / NBRC 103217 / DC2201) protein is Ribosomal RNA small subunit methyltransferase H.